The chain runs to 369 residues: Protein VP6 (369 aa).

The tract at residues 20–208 is disordered; the sequence is LEQRSIAPLL…EEAKVGGGDR (189 aa). The span at 29–66 shows a compositional bias: basic and acidic residues; the sequence is LREKNSTEAKSKLKEDGEKKNKSEKEENKIHDDRRVES. 2 stretches are compositionally biased toward gly residues: residues 92 to 111 and 162 to 171; these read TGGG…GGVG and TSGGLQGRGG. Positions 196–208 are enriched in basic and acidic residues; the sequence is TEGEEAKVGGGDR.

This sequence belongs to the orbivirus VP6 family.

Its subcellular location is the virion. The polypeptide is Protein VP6 (S9) (African horse sickness virus 3 (AHSV-3)).